Reading from the N-terminus, the 1019-residue chain is DNA topoisomerase 1 (1019 aa).

The interval 1–160 (MNSIQVKNEP…KTMSITGSGE (160 aa)) is disordered. A compositionally biased stretch (basic and acidic residues) spans 46 to 56 (KPLAKRPKVED). Residues 62–78 (PLTSTVSSQNGVQKRSG) are compositionally biased toward polar residues. Composition is skewed to acidic residues over residues 83 to 93 (DDNDDDSDSDS) and 107 to 136 (SDDDEDDDDDDDEGDDDDEEDDDDDDDDDD). Interaction with DNA regions lie at residues 379–380 (KY), 442–447 (RAGNEK), and 556–558 (SAK). Residues 386–860 (TSNFKTNSDR…KKVKKEEEEN (475 aa)) enclose the Topo IB-type catalytic domain. The disordered stretch occupies residues 716–737 (EQKGLTGDDGTPKKGKKAKNVE). Catalysis depends on Tyr822, which acts as the O-(3'-phospho-DNA)-tyrosine intermediate. Disordered regions lie at residues 843-890 (GQGK…TGDS) and 940-1019 (MRKL…AAVV). Basic and acidic residues predominate over residues 854-863 (KKEEEENDIK). Residues 864 to 879 (PKKKDAKGAASKKRAA) show a composition bias toward basic residues. Basic and acidic residues-rich tracts occupy residues 940 to 950 (MRKLDSAERKG) and 980 to 996 (TSADRKMSKPIKAVDKT). A compositionally biased stretch (acidic residues) spans 997–1012 (EESDDDLSSDSSDDED).

The protein belongs to the type IB topoisomerase family. In terms of assembly, monomer.

It carries out the reaction ATP-independent breakage of single-stranded DNA, followed by passage and rejoining.. Functionally, releases the supercoiling and torsional tension of DNA introduced during the DNA replication and transcription by transiently cleaving and rejoining one strand of the DNA duplex. Introduces a single-strand break via transesterification at a target site in duplex DNA. The scissile phosphodiester is attacked by the catalytic tyrosine of the enzyme, resulting in the formation of a DNA-(3'-phosphotyrosyl)-enzyme intermediate and the expulsion of a 5'-OH DNA strand. The free DNA strand then rotates around the intact phosphodiester bond on the opposing strand, thus removing DNA supercoils. Finally, in the religation step, the DNA 5'-OH attacks the covalent intermediate to expel the active-site tyrosine and restore the DNA phosphodiester backbone. This is DNA topoisomerase 1 (TOP1) from Mycosarcoma maydis (Corn smut fungus).